Here is a 288-residue protein sequence, read N- to C-terminus: Sulfur carrier protein FdhD (288 aa).

Catalysis depends on Cys-122, which acts as the Cysteine persulfide intermediate. 268-273 (FVRGER) serves as a coordination point for Mo-bis(molybdopterin guanine dinucleotide).

It belongs to the FdhD family.

Its subcellular location is the cytoplasm. Its function is as follows. Required for formate dehydrogenase (FDH) activity. Acts as a sulfur carrier protein that transfers sulfur from IscS to the molybdenum cofactor prior to its insertion into FDH. This Anaeromyxobacter sp. (strain K) protein is Sulfur carrier protein FdhD.